The primary structure comprises 379 residues: Queuine tRNA-ribosyltransferase (379 aa).

Aspartate 94 functions as the Proton acceptor in the catalytic mechanism. Residues 94-98 (DSGGF), aspartate 148, glutamine 191, and glycine 218 contribute to the substrate site. An RNA binding region spans residues 249–255 (GVGSPDS). Catalysis depends on aspartate 268, which acts as the Nucleophile. The tract at residues 273–277 (TRIAR) is RNA binding; important for wobble base 34 recognition. Zn(2+) is bound by residues cysteine 306, cysteine 308, cysteine 311, and histidine 337.

Belongs to the queuine tRNA-ribosyltransferase family. Homodimer. Within each dimer, one monomer is responsible for RNA recognition and catalysis, while the other monomer binds to the replacement base PreQ1. The cofactor is Zn(2+).

The catalysed reaction is 7-aminomethyl-7-carbaguanine + guanosine(34) in tRNA = 7-aminomethyl-7-carbaguanosine(34) in tRNA + guanine. The protein operates within tRNA modification; tRNA-queuosine biosynthesis. Functionally, catalyzes the base-exchange of a guanine (G) residue with the queuine precursor 7-aminomethyl-7-deazaguanine (PreQ1) at position 34 (anticodon wobble position) in tRNAs with GU(N) anticodons (tRNA-Asp, -Asn, -His and -Tyr). Catalysis occurs through a double-displacement mechanism. The nucleophile active site attacks the C1' of nucleotide 34 to detach the guanine base from the RNA, forming a covalent enzyme-RNA intermediate. The proton acceptor active site deprotonates the incoming PreQ1, allowing a nucleophilic attack on the C1' of the ribose to form the product. After dissociation, two additional enzymatic reactions on the tRNA convert PreQ1 to queuine (Q), resulting in the hypermodified nucleoside queuosine (7-(((4,5-cis-dihydroxy-2-cyclopenten-1-yl)amino)methyl)-7-deazaguanosine). The polypeptide is Queuine tRNA-ribosyltransferase (Listeria monocytogenes serovar 1/2a (strain ATCC BAA-679 / EGD-e)).